The sequence spans 280 residues: Retinoschisin (280 aa).

An N-terminal signal peptide occupies residues 1-23 (MHLPREAFLLALAGAFIFPSSQQ). The F5/8 type C domain occupies 119 to 275 (CPYHRPLGFE…IALRLELLLC (157 aa)). 2 disulfides stabilise this stretch: cysteine 119/cysteine 275 and cysteine 166/cysteine 198.

Homooctamer of 4 homodimers; disulfide-linked. The homooctamer has a flat, cogwheel structure with a diameter of about 14 nm. Two stacked octamers can assemble to form a hexadecamer.

Its subcellular location is the secreted. It is found in the cell membrane. Binds negatively charged membrane lipids, such as phosphatidylserine and phosphoinositides. May play a role in cell-cell adhesion processes in the retina, via homomeric interaction between octamers present on the surface of two neighboring cells. Required for normal structure and function of the retina. In Takifugu rubripes (Japanese pufferfish), this protein is Retinoschisin (xlrs1).